Reading from the N-terminus, the 317-residue chain is NAC domain-containing protein 55 (317 aa).

The NAC domain maps to leucine 14–lysine 162. A DNA-binding region spans residues valine 111–lysine 168.

Expressed in leaves.

It is found in the nucleus. Transcription factors that bind specifically to the 5'-CATGTG-3' motif. This Arabidopsis thaliana (Mouse-ear cress) protein is NAC domain-containing protein 55 (NAC055).